The sequence spans 189 residues: uncharacterized protein (189 aa).

Positions 2–62 (RPTNKRILDA…ALLSQHSSNR (61 aa)) constitute an HTH tetR-type domain. Positions 25–44 (TTKEIAEKANVSEATIFRNF) form a DNA-binding region, H-T-H motif.

This is an uncharacterized protein from Bacillus subtilis (strain 168).